Reading from the N-terminus, the 233-residue chain is Phosphoribosylformylglycinamidine synthase subunit PurQ (233 aa).

A Glutamine amidotransferase type-1 domain is found at 3 to 233; sequence SAILVFPGIN…GLVEHLAKAA (231 aa). C87 serves as the catalytic Nucleophile. Catalysis depends on residues H204 and E206.

In terms of assembly, part of the FGAM synthase complex composed of 1 PurL, 1 PurQ and 2 PurS subunits.

It is found in the cytoplasm. The catalysed reaction is N(2)-formyl-N(1)-(5-phospho-beta-D-ribosyl)glycinamide + L-glutamine + ATP + H2O = 2-formamido-N(1)-(5-O-phospho-beta-D-ribosyl)acetamidine + L-glutamate + ADP + phosphate + H(+). It catalyses the reaction L-glutamine + H2O = L-glutamate + NH4(+). Its pathway is purine metabolism; IMP biosynthesis via de novo pathway; 5-amino-1-(5-phospho-D-ribosyl)imidazole from N(2)-formyl-N(1)-(5-phospho-D-ribosyl)glycinamide: step 1/2. Functionally, part of the phosphoribosylformylglycinamidine synthase complex involved in the purines biosynthetic pathway. Catalyzes the ATP-dependent conversion of formylglycinamide ribonucleotide (FGAR) and glutamine to yield formylglycinamidine ribonucleotide (FGAM) and glutamate. The FGAM synthase complex is composed of three subunits. PurQ produces an ammonia molecule by converting glutamine to glutamate. PurL transfers the ammonia molecule to FGAR to form FGAM in an ATP-dependent manner. PurS interacts with PurQ and PurL and is thought to assist in the transfer of the ammonia molecule from PurQ to PurL. The protein is Phosphoribosylformylglycinamidine synthase subunit PurQ of Rhodopseudomonas palustris (strain BisB18).